A 448-amino-acid polypeptide reads, in one-letter code: Methionine aminopeptidase 2 (448 aa).

Residues 1-94 form a disordered region; it reads MAAQVTDALK…PRVLLSNLFP (94 aa). Acidic residues predominate over residues 37–50; it reads AEAEDSDDDDEEPV. Residues 61–74 are compositionally biased toward basic residues; sequence KKKRKRKKKPKKKA. Substrate is bound at residue H201. The a divalent metal cation site is built by D221, D232, and H301. Position 309 (H309) interacts with substrate. A divalent metal cation is bound by residues E334 and E429.

This sequence belongs to the peptidase M24A family. Methionine aminopeptidase eukaryotic type 2 subfamily. Co(2+) serves as cofactor. Zn(2+) is required as a cofactor. It depends on Mn(2+) as a cofactor. The cofactor is Fe(2+).

It is found in the cytoplasm. It catalyses the reaction Release of N-terminal amino acids, preferentially methionine, from peptides and arylamides.. Functionally, cotranslationally removes the N-terminal methionine from nascent proteins. The N-terminal methionine is often cleaved when the second residue in the primary sequence is small and uncharged (Met-Ala-, Cys, Gly, Pro, Ser, Thr, or Val). This Botryotinia fuckeliana (strain B05.10) (Noble rot fungus) protein is Methionine aminopeptidase 2.